A 219-amino-acid chain; its full sequence is Adenylate kinase (219 aa).

10–15 (GAGKGT) contacts ATP. Residues 30–59 (STGDMLRVAVKVGTPLGIEAKKIMDSGGLV) are NMP. AMP-binding positions include Thr-31, Arg-36, 57–59 (GLV), 85–88 (GFPR), and Gln-92. The LID stretch occupies residues 122–159 (GRRTHLKSGRTYHITYNQPKVEGIDDITGEKLVQRSDD). Residues Arg-123 and 132–133 (TY) contribute to the ATP site. AMP is bound by residues Arg-156 and Arg-167. Gly-202 contributes to the ATP binding site.

It belongs to the adenylate kinase family. Monomer.

It localises to the cytoplasm. It carries out the reaction AMP + ATP = 2 ADP. Its pathway is purine metabolism; AMP biosynthesis via salvage pathway; AMP from ADP: step 1/1. In terms of biological role, catalyzes the reversible transfer of the terminal phosphate group between ATP and AMP. Plays an important role in cellular energy homeostasis and in adenine nucleotide metabolism. This chain is Adenylate kinase, found in Vesicomyosocius okutanii subsp. Calyptogena okutanii (strain HA).